A 273-amino-acid chain; its full sequence is Ribosomal RNA small subunit methyltransferase A (273 aa).

The S-adenosyl-L-methionine site is built by Asn-18, Leu-20, Gly-45, Glu-66, Asp-91, and Asn-113.

It belongs to the class I-like SAM-binding methyltransferase superfamily. rRNA adenine N(6)-methyltransferase family. RsmA subfamily.

The protein resides in the cytoplasm. The enzyme catalyses adenosine(1518)/adenosine(1519) in 16S rRNA + 4 S-adenosyl-L-methionine = N(6)-dimethyladenosine(1518)/N(6)-dimethyladenosine(1519) in 16S rRNA + 4 S-adenosyl-L-homocysteine + 4 H(+). Functionally, specifically dimethylates two adjacent adenosines (A1518 and A1519) in the loop of a conserved hairpin near the 3'-end of 16S rRNA in the 30S particle. May play a critical role in biogenesis of 30S subunits. The protein is Ribosomal RNA small subunit methyltransferase A of Escherichia coli O81 (strain ED1a).